Reading from the N-terminus, the 225-residue chain is Cobalt transport protein CbiM (225 aa).

Helical transmembrane passes span 7-27 (VLPLGWCAFWNALALPFVAIA), 43-63 (PFVGLIAAAVFAISCMPVPVP), 76-96 (LAAVLIGPWMTVLVTVVALLI), 108-128 (TLGADVASMGIAGAFTGYFAF), 143-163 (FLAGVTSDWATYATTALALAL), and 175-195 (FTGVALAFVPTQLPLGLLEGV).

The protein belongs to the CbiM family. Forms an energy-coupling factor (ECF) transporter complex composed of an ATP-binding protein (A component, CbiO), a transmembrane protein (T component, CbiQ) and 2 possible substrate-capture proteins (S components, CbiM and CbiN) of unknown stoichimetry.

The protein localises to the cell inner membrane. It participates in cofactor biosynthesis; adenosylcobalamin biosynthesis. Functionally, part of the energy-coupling factor (ECF) transporter complex CbiMNOQ involved in cobalt import. This is Cobalt transport protein CbiM from Sorangium cellulosum (strain So ce56) (Polyangium cellulosum (strain So ce56)).